We begin with the raw amino-acid sequence, 497 residues long: Probable cytosol aminopeptidase (497 aa).

2 residues coordinate Mn(2+): K263 and D268. K275 is a catalytic residue. Mn(2+)-binding residues include D286, D345, and E347. R349 is an active-site residue.

It belongs to the peptidase M17 family. Mn(2+) is required as a cofactor.

Its subcellular location is the cytoplasm. The enzyme catalyses Release of an N-terminal amino acid, Xaa-|-Yaa-, in which Xaa is preferably Leu, but may be other amino acids including Pro although not Arg or Lys, and Yaa may be Pro. Amino acid amides and methyl esters are also readily hydrolyzed, but rates on arylamides are exceedingly low.. It catalyses the reaction Release of an N-terminal amino acid, preferentially leucine, but not glutamic or aspartic acids.. In terms of biological role, presumably involved in the processing and regular turnover of intracellular proteins. Catalyzes the removal of unsubstituted N-terminal amino acids from various peptides. The sequence is that of Probable cytosol aminopeptidase from Allorhizobium ampelinum (strain ATCC BAA-846 / DSM 112012 / S4) (Agrobacterium vitis (strain S4)).